We begin with the raw amino-acid sequence, 165 residues long: Large ribosomal subunit protein uL10 (165 aa).

Belongs to the universal ribosomal protein uL10 family. In terms of assembly, part of the ribosomal stalk of the 50S ribosomal subunit. The N-terminus interacts with L11 and the large rRNA to form the base of the stalk. The C-terminus forms an elongated spine to which L12 dimers bind in a sequential fashion forming a multimeric L10(L12)X complex.

Forms part of the ribosomal stalk, playing a central role in the interaction of the ribosome with GTP-bound translation factors. This is Large ribosomal subunit protein uL10 from Burkholderia thailandensis (strain ATCC 700388 / DSM 13276 / CCUG 48851 / CIP 106301 / E264).